Consider the following 162-residue polypeptide: ATP synthase subunit b (162 aa).

The helical transmembrane segment at 6-28 (LVTFVLTIVNILVLFYLLKRFLF) threads the bilayer.

Belongs to the ATPase B chain family. In terms of assembly, F-type ATPases have 2 components, F(1) - the catalytic core - and F(0) - the membrane proton channel. F(1) has five subunits: alpha(3), beta(3), gamma(1), delta(1), epsilon(1). F(0) has three main subunits: a(1), b(2) and c(10-14). The alpha and beta chains form an alternating ring which encloses part of the gamma chain. F(1) is attached to F(0) by a central stalk formed by the gamma and epsilon chains, while a peripheral stalk is formed by the delta and b chains.

Its subcellular location is the cell membrane. In terms of biological role, f(1)F(0) ATP synthase produces ATP from ADP in the presence of a proton or sodium gradient. F-type ATPases consist of two structural domains, F(1) containing the extramembraneous catalytic core and F(0) containing the membrane proton channel, linked together by a central stalk and a peripheral stalk. During catalysis, ATP synthesis in the catalytic domain of F(1) is coupled via a rotary mechanism of the central stalk subunits to proton translocation. Its function is as follows. Component of the F(0) channel, it forms part of the peripheral stalk, linking F(1) to F(0). This chain is ATP synthase subunit b, found in Natranaerobius thermophilus (strain ATCC BAA-1301 / DSM 18059 / JW/NM-WN-LF).